Reading from the N-terminus, the 263-residue chain is 5'-nucleotidase SurE (263 aa).

A divalent metal cation contacts are provided by Asp21, Asp22, Ser52, and Asn105.

It belongs to the SurE nucleotidase family. It depends on a divalent metal cation as a cofactor.

The protein localises to the cytoplasm. It catalyses the reaction a ribonucleoside 5'-phosphate + H2O = a ribonucleoside + phosphate. Nucleotidase that shows phosphatase activity on nucleoside 5'-monophosphates. The protein is 5'-nucleotidase SurE of Vibrio cholerae serotype O1 (strain ATCC 39541 / Classical Ogawa 395 / O395).